A 941-amino-acid chain; its full sequence is Glycine dehydrogenase (decarboxylating) (941 aa).

Position 692 is an N6-(pyridoxal phosphate)lysine (lysine 692).

The protein belongs to the GcvP family. The glycine cleavage system is composed of four proteins: P, T, L and H. It depends on pyridoxal 5'-phosphate as a cofactor.

It carries out the reaction N(6)-[(R)-lipoyl]-L-lysyl-[glycine-cleavage complex H protein] + glycine + H(+) = N(6)-[(R)-S(8)-aminomethyldihydrolipoyl]-L-lysyl-[glycine-cleavage complex H protein] + CO2. The glycine cleavage system catalyzes the degradation of glycine. The P protein binds the alpha-amino group of glycine through its pyridoxal phosphate cofactor; CO(2) is released and the remaining methylamine moiety is then transferred to the lipoamide cofactor of the H protein. This is Glycine dehydrogenase (decarboxylating) from Mycobacterium tuberculosis (strain ATCC 25177 / H37Ra).